Reading from the N-terminus, the 90-residue chain is Progonadoliberin-3 (90 aa).

A signal peptide spans 1-23 (MEASSRVTVQVLLLALVVQVTLS). Residue glutamine 24 is modified to Pyrrolidone carboxylic acid. A Glycine amide modification is found at glycine 33.

It belongs to the GnRH family.

The protein localises to the secreted. Functionally, stimulates the secretion of gonadotropins. The polypeptide is Progonadoliberin-3 (gnrh3) (Pagrus major (Red sea bream)).